The sequence spans 360 residues: NAD(P)H-quinone oxidoreductase subunit 1, chloroplastic (360 aa).

The next 9 helical transmembrane spans lie at 27–47, 98–118, 129–149, 165–185, 203–223, 248–268, 269–289, 297–317, and 340–360; these read IWIF…VLVI, FSIG…VIPF, IGIF…LMSG, AAQS…ISLL, FWGW…ISSL, YSGI…LISS, LFVT…ISIL, IFGT…FLFI, and FLLP…LFSL.

The protein belongs to the complex I subunit 1 family. NDH is composed of at least 16 different subunits, 5 of which are encoded in the nucleus.

The protein resides in the plastid. It is found in the chloroplast thylakoid membrane. The enzyme catalyses a plastoquinone + NADH + (n+1) H(+)(in) = a plastoquinol + NAD(+) + n H(+)(out). It catalyses the reaction a plastoquinone + NADPH + (n+1) H(+)(in) = a plastoquinol + NADP(+) + n H(+)(out). In terms of biological role, NDH shuttles electrons from NAD(P)H:plastoquinone, via FMN and iron-sulfur (Fe-S) centers, to quinones in the photosynthetic chain and possibly in a chloroplast respiratory chain. The immediate electron acceptor for the enzyme in this species is believed to be plastoquinone. Couples the redox reaction to proton translocation, and thus conserves the redox energy in a proton gradient. The chain is NAD(P)H-quinone oxidoreductase subunit 1, chloroplastic from Lepidium virginicum (Virginia pepperweed).